The primary structure comprises 197 residues: RILP-like protein 2 (197 aa).

Positions 1 to 24 (MEDHPVREEEDGEEDEGALAKSPL) are disordered. A compositionally biased stretch (acidic residues) spans 8 to 17 (EEEDGEEDEG). The RH1 domain maps to 14–96 (EDEGALAKSP…KQEVEGLRKA (83 aa)). Residues 69–153 (VNEGSLAVEE…VQEELQCYRS (85 aa)) adopt a coiled-coil conformation. Residues 119–184 (RPRFTLQELR…GNGEKEERTI (66 aa)) form the RH2 domain.

It belongs to the RILPL family. Homodimer. Interacts with RAC1. Interacts (via N-terminus) with MYO5A, the interaction is required for its role in dendrite formation. Interacts with RAB8A; interaction is dependent on the phosphorylation of RAB8A on 'Thr-72'. Interacts with RAB10 and RAB12; interaction is dependent on the phosphorylation of 'Thr-73' on RAB10 and 'Ser-105' on RAB12.

The protein localises to the cytoplasm. The protein resides in the cytosol. It is found in the cytoskeleton. Its subcellular location is the microtubule organizing center. It localises to the centrosome. The protein localises to the cell projection. The protein resides in the cilium. Its function is as follows. Involved in cell shape and neuronal morphogenesis, positively regulating the establishment and maintenance of dendritic spines. Plays a role in cellular protein transport, including protein transport away from primary cilia. May function via activation of RAC1 and PAK1. In Mus musculus (Mouse), this protein is RILP-like protein 2 (Rilpl2).